The primary structure comprises 879 residues: Alanine--tRNA ligase (879 aa).

Residues His567, His571, Cys669, and His673 each contribute to the Zn(2+) site.

It belongs to the class-II aminoacyl-tRNA synthetase family. Zn(2+) serves as cofactor.

It localises to the cytoplasm. It carries out the reaction tRNA(Ala) + L-alanine + ATP = L-alanyl-tRNA(Ala) + AMP + diphosphate. In terms of biological role, catalyzes the attachment of alanine to tRNA(Ala) in a two-step reaction: alanine is first activated by ATP to form Ala-AMP and then transferred to the acceptor end of tRNA(Ala). Also edits incorrectly charged Ser-tRNA(Ala) and Gly-tRNA(Ala) via its editing domain. The polypeptide is Alanine--tRNA ligase (Lactobacillus acidophilus (strain ATCC 700396 / NCK56 / N2 / NCFM)).